A 275-amino-acid chain; its full sequence is Peflin (275 aa).

A run of 8 repeats spans residues 21 to 29 (PPGGYYPGP), 31 to 39 (HGGGQYGSG), 41 to 49 (PPGGGYGAP), 50 to 59 (APGGPYGYPS), 60 to 68 (AGGVPSGTP), 76 to 84 (PPGGPYGQL), 85 to 91 (PPGGPYG), and 92 to 100 (TQPGHYGQG). 2 disordered regions span residues 21 to 45 (PPGG…PGGG) and 59 to 103 (SAGG…GGVP). Positions 21–100 (PPGGYYPGPP…GTQPGHYGQG (80 aa)) are 8 X 9 AA approximate tandem repeat of [AP]-P-G-G-P-Y-G-G-P-P. Positions 31–45 (HGGGQYGSGLPPGGG) are enriched in gly residues. A compositionally biased stretch (low complexity) spans 59–70 (SAGGVPSGTPSG). EF-hand domains follow at residues 105–140 (NVDP…SNWS), 146–174 (TCLM…WKFL), 172–207 (KFLQ…MGYN), 208–244 (LSPQ…LQVL), and 245–274 (TEAF…ASRM). Ca(2+) is bound by residues Asp118, Asp120, Ser122, Tyr124, and Glu129. The Ca(2+) site is built by Asp185, Asp187, Ser189, Ser191, and Glu196. Residues 195–275 (TELQQALSQM…FVTMTASRML (81 aa)) are required for interaction with PDCD6.

In terms of assembly, heterodimer; heterodimerizes (via the EF-hand 5) with PDCD6. Dissociates from PDCD6 in presence of calcium. In terms of processing, ubiquitinated by the BCR(KLHL12) E3 ubiquitin ligase complex.

It is found in the cytoplasm. The protein resides in the endoplasmic reticulum. The protein localises to the membrane. Its subcellular location is the cytoplasmic vesicle. It localises to the COPII-coated vesicle membrane. In terms of biological role, calcium-binding protein that acts as an adapter that bridges unrelated proteins or stabilizes weak protein-protein complexes in response to calcium. Together with PDCD6, acts as a calcium-dependent adapter for the BCR(KLHL12) complex, a complex involved in endoplasmic reticulum (ER)-Golgi transport by regulating the size of COPII coats. In response to cytosolic calcium increase, the heterodimer formed with PDCD6 interacts with, and bridges together the BCR(KLHL12) complex and SEC31 (SEC31A or SEC31B), promoting monoubiquitination of SEC31 and subsequent collagen export, which is required for neural crest specification. Its role in the heterodimer formed with PDCD6 is however unclear: some evidence shows that PEF1 and PDCD6 work together and promote association between PDCD6 and SEC31 in presence of calcium. Other reports show that PEF1 dissociates from PDCD6 in presence of calcium, and may act as a negative regulator of PDCD6. Also acts as a negative regulator of ER-Golgi transport; possibly by inhibiting interaction between PDCD6 and SEC31. The polypeptide is Peflin (Mus musculus (Mouse)).